A 553-amino-acid polypeptide reads, in one-letter code: Salicylyl-CoA synthase / salicylate adenylyltransferase (553 aa).

Position 203 (G203) interacts with ATP. H246 to N247 serves as a coordination point for substrate. Positions 320, 342, 426, 441, and 533 each coordinate ATP. Residue K533 participates in substrate binding.

This sequence belongs to the ATP-dependent AMP-binding enzyme family.

It catalyses the reaction salicylate + ATP + CoA = 2-hydroxybenzoyl-CoA + AMP + diphosphate. Functionally, involved in the degradation of salicylate via a pathway involving coenzyme A derivative. Catalyzes the conversion of salicylate to salicyloyl-CoA via the formation of a salicylate-adenylate intermediate. The substrate specificity is strong, since benzoate, 3-hydroxybenzoate, 4-hydroxybenzoate, gentisate, 2-aminobenzoate, aminobenzoate, salicylamide, salicylaldoxime and 2-hydroxyphenyl acetate cannot substitute for salicylate. This Streptomyces sp protein is Salicylyl-CoA synthase / salicylate adenylyltransferase.